The sequence spans 84 residues: U1-theraphotoxin-Hs1a (84 aa).

The N-terminal stretch at 1 to 22 is a signal peptide; the sequence is MKVTLIAILTCAAVLVLHTTAA. A propeptide spanning residues 23–48 is cleaved from the precursor; it reads EELEESQLMEVGMPDTELAAVDEERL. Disulfide bonds link Cys51-Cys65, Cys55-Cys76, and Cys70-Cys81.

The protein belongs to the neurotoxin 12 (Hwtx-2) family. 02 (Hwtx-2) subfamily. In terms of tissue distribution, expressed by the venom gland.

It is found in the secreted. Functionally, blocks neuromuscular transmission. Acts cooperatively to potentiate the activity of huwentoxin-I. Paralyzes locusts and kills mice following intracerebroventricular injection. This chain is U1-theraphotoxin-Hs1a, found in Cyriopagopus schmidti (Chinese bird spider).